Reading from the N-terminus, the 383-residue chain is Gamma-butyrobetaine dioxygenase (383 aa).

Residues Cys46, Cys48, Cys51, and His91 each coordinate Zn(2+). 3 residues coordinate Fe cation: His209, Asp211, and His350.

It belongs to the gamma-BBH/TMLD family. In terms of assembly, homodimer. The cofactor is Fe(2+). Requires L-ascorbate as cofactor.

It is found in the cytoplasm. It carries out the reaction 4-(trimethylamino)butanoate + 2-oxoglutarate + O2 = carnitine + succinate + CO2. It participates in amine and polyamine biosynthesis; carnitine biosynthesis. Functionally, catalyzes the formation of L-carnitine from gamma-butyrobetaine. This Pseudomonas sp. (strain AK-1) protein is Gamma-butyrobetaine dioxygenase.